The chain runs to 424 residues: Inhibin beta A chain (424 aa).

Positions 1–20 (MPLLWLRGFLLASCWIIVRS) are cleaved as a signal peptide. The propeptide occupies 21–308 (SPTPGSGGHS…EEHPHRRRRR (288 aa)). A glycan (N-linked (GlcNAc...) asparagine) is linked at Asn165. 2 disordered regions span residues 178–197 (QQRRPQGSADAGEEAEDVGF) and 259–306 (KKKK…HRRR). Acidic residues predominate over residues 188 to 197 (AGEEAEDVGF). The span at 263–275 (KEEEAEGRKRDGE) shows a compositional bias: basic and acidic residues. 4 cysteine pairs are disulfide-bonded: Cys312/Cys320, Cys319/Cys389, Cys348/Cys421, and Cys352/Cys423.

The protein belongs to the TGF-beta family. Dimeric, linked by one or more disulfide bonds. Inhibin A is a dimer of alpha/INHA and beta-A/INHBA. Activin A is a homodimer of beta-A/INHBA. Activin AB is a dimer of beta-A/INHBA and beta-B/INHBB. Interacts with FST and FSTL3; these interactions prevent activin A interaction to its type II receptor. Activin A interacts with ACVR2A. Activin A interacts with BMPR2. Inhibin A interacts with ACVR1; this interaction creates a non-signaling complex (NSC) that inhibits ACVR1-mediated BMP signaling. Inhibin A interacts with ACVR2A.

Its subcellular location is the secreted. In terms of biological role, inhibins/activins are involved in regulating a number of diverse functions such as hypothalamic and pituitary hormone secretion, gonadal hormone secretion, germ cell development and maturation, erythroid differentiation, insulin secretion, nerve cell survival, embryonic axial development or bone growth, depending on their subunit composition. Its function is as follows. Activin A is a homodimer of INHBA that plays a role in several essential biological processes including embryonic development, stem cell maintenance and differentiation, haematopoiesis, cell proliferation and tissue fibrosis. Signals through type I (such as ACVR1B or ACVR1C) and type II receptors (such as ACVR2A, ACVR2B or BMPR2) which, upon ligand binding, phosphorylate SMAD2 and SMAD3 intracellular signaling mediators that form a complex with SMAD4, translocate to the nucleus and modulate gene expression. Can also activate alternative non-canonical intracellular signaling pathways including the p38 MAPK, extracellular signal-regulated kinases 1/2 (ERK1/2) and c-Jun N-terminal kinases (JNKs) to modulate cell migration and differentiation. Alternatively, promotes osteoblastic differentiation via ACVRL1-SMAD1/5/9 pathway. In addition, can engage the type I receptor ACVR1 to form an ACVR1-activin A-type II receptor non-signaling complex (NSC) that renders receptors unavailable for engagement with BMPs, hence resulting in an apparent inhibition of ACVR1-mediated BMP signaling. Functionally, inhibin A is a dimer of alpha/INHA and beta-A/INHBA that functions as a feedback regulator in the hypothalamic-pituitary-gonadal (HPG) axis. Inhibits the secretion of FSH from the anterior pituitary gland by acting on pituitary gonadotrope cells. Antagonizes activin A by binding to the proteoglycan, betaglycan, and forming a stable complex with and, thereby, sequestering type II activin receptors while excluding type I receptor. This is Inhibin beta A chain (INHBA) from Sus scrofa (Pig).